The chain runs to 226 residues: Ornithine decarboxylase antizyme (226 aa).

The protein belongs to the ODC antizyme family. Interacts with ODC and thereby sterically blocks ODC homodimerization.

Functionally, ornithine decarboxylase (ODC) antizyme protein that negatively regulates ODC activity and intracellular polyamine biosynthesis in response to increased intracellular polyamine levels. Binds to ODC monomers, inhibiting the assembly of the functional ODC homodimer, and targets the monomers for ubiquitin-independent proteolytic destruction by the 26S proteasome. The protein is Ornithine decarboxylase antizyme (spa1) of Schizosaccharomyces japonicus (Fission yeast).